Reading from the N-terminus, the 84-residue chain is Large ribosomal subunit protein bL27 (84 aa).

Positions 1-21 (MAHKKGGGSTKNGRDSNPKYL) are disordered.

The protein belongs to the bacterial ribosomal protein bL27 family.

In Chlorobium luteolum (strain DSM 273 / BCRC 81028 / 2530) (Pelodictyon luteolum), this protein is Large ribosomal subunit protein bL27.